The chain runs to 255 residues: Imidazole glycerol phosphate synthase subunit HisF (255 aa).

Residues aspartate 12 and aspartate 131 contribute to the active site.

The protein belongs to the HisA/HisF family. As to quaternary structure, heterodimer of HisH and HisF.

It localises to the cytoplasm. It catalyses the reaction 5-[(5-phospho-1-deoxy-D-ribulos-1-ylimino)methylamino]-1-(5-phospho-beta-D-ribosyl)imidazole-4-carboxamide + L-glutamine = D-erythro-1-(imidazol-4-yl)glycerol 3-phosphate + 5-amino-1-(5-phospho-beta-D-ribosyl)imidazole-4-carboxamide + L-glutamate + H(+). It participates in amino-acid biosynthesis; L-histidine biosynthesis; L-histidine from 5-phospho-alpha-D-ribose 1-diphosphate: step 5/9. IGPS catalyzes the conversion of PRFAR and glutamine to IGP, AICAR and glutamate. The HisF subunit catalyzes the cyclization activity that produces IGP and AICAR from PRFAR using the ammonia provided by the HisH subunit. This chain is Imidazole glycerol phosphate synthase subunit HisF, found in Ignicoccus hospitalis (strain KIN4/I / DSM 18386 / JCM 14125).